A 204-amino-acid polypeptide reads, in one-letter code: Ribosome maturation factor RimP (204 aa).

The protein belongs to the RimP family.

The protein resides in the cytoplasm. Required for maturation of 30S ribosomal subunits. This Allorhizobium ampelinum (strain ATCC BAA-846 / DSM 112012 / S4) (Agrobacterium vitis (strain S4)) protein is Ribosome maturation factor RimP.